The chain runs to 403 residues: Putative gustatory receptor 98b (403 aa).

Residues Met-1 to Arg-11 lie on the Cytoplasmic side of the membrane. The helical transmembrane segment at Ala-12–Gly-32 threads the bilayer. Residues His-33–Val-48 lie on the Extracellular side of the membrane. The chain crosses the membrane as a helical span at residues Phe-49–Ile-69. Topologically, residues Asp-70 to Arg-83 are cytoplasmic. Residues Val-84–Met-104 traverse the membrane as a helical segment. At Leu-105 to Arg-144 the chain is on the extracellular side. A helical transmembrane segment spans residues Met-145–Met-165. Over Thr-166–Ser-191 the chain is Cytoplasmic. A helical membrane pass occupies residues Leu-192 to Leu-212. Residues Ser-213–Thr-259 lie on the Extracellular side of the membrane. The helical transmembrane segment at Met-260 to Ile-280 threads the bilayer. The Cytoplasmic segment spans residues Asn-281–Asp-365. A helical membrane pass occupies residues Ile-366–Ile-386. The Extracellular portion of the chain corresponds to Gln-387 to Asn-403.

This sequence belongs to the insect chemoreceptor superfamily. Gustatory receptor (GR) family. Gr2a subfamily.

Its subcellular location is the cell membrane. Probable gustatory receptor which mediates acceptance or avoidance behavior, depending on its substrates. This is Putative gustatory receptor 98b (Gr98b) from Drosophila melanogaster (Fruit fly).